An 81-amino-acid chain; its full sequence is Photosystem I iron-sulfur center (81 aa).

2 consecutive 4Fe-4S ferredoxin-type domains span residues 2 to 31 (SHSVKIYDTCIGCTQCVRACPTDVLEMVPW) and 39 to 68 (IASAPRTEDCVGCKRCESACPTDFLSVRVY). Residues Cys-11, Cys-14, Cys-17, Cys-21, Cys-48, Cys-51, Cys-54, and Cys-58 each coordinate [4Fe-4S] cluster.

As to quaternary structure, the eukaryotic PSI reaction center is composed of at least 11 subunits. [4Fe-4S] cluster serves as cofactor.

It localises to the plastid. The protein resides in the chloroplast thylakoid membrane. It catalyses the reaction reduced [plastocyanin] + hnu + oxidized [2Fe-2S]-[ferredoxin] = oxidized [plastocyanin] + reduced [2Fe-2S]-[ferredoxin]. In terms of biological role, apoprotein for the two 4Fe-4S centers FA and FB of photosystem I (PSI); essential for photochemical activity. FB is the terminal electron acceptor of PSI, donating electrons to ferredoxin. The C-terminus interacts with PsaA/B/D and helps assemble the protein into the PSI complex. Required for binding of PsaD and PsaE to PSI. PSI is a plastocyanin/cytochrome c6-ferredoxin oxidoreductase, converting photonic excitation into a charge separation, which transfers an electron from the donor P700 chlorophyll pair to the spectroscopically characterized acceptors A0, A1, FX, FA and FB in turn. The polypeptide is Photosystem I iron-sulfur center (Pleurastrum terricola (Filamentous green alga)).